The primary structure comprises 265 residues: H-2 class II histocompatibility antigen, A-Q beta chain (265 aa).

The N-terminal stretch at 1–27 (MALQIPSLLLSAAVVVLMVLSSPRTEG) is a signal peptide. Residues 28 to 122 (GNSERHFVAQ…VETHTSLRRL (95 aa)) form a beta-1 region. The Extracellular segment spans residues 28–227 (GNSERHFVAQ…AQSESARSKM (200 aa)). 2 disulfides stabilise this stretch: Cys42–Cys106 and Cys145–Cys201. N-linked (GlcNAc...) asparagine glycosylation occurs at Asn46. The segment at 123-217 (EQPNVAISLS…LKSPITVEWR (95 aa)) is beta-2. The Ig-like C1-type domain maps to 125–213 (PNVAISLSRT…EHPSLKSPIT (89 aa)). Residues 218–227 (AQSESARSKM) are connecting peptide. A helical transmembrane segment spans residues 228-247 (LSGIGGCVLGVIFLGLGLFI). At 248-265 (RHRSQKGPRGPPPAGLLQ) the chain is on the cytoplasmic side.

The protein belongs to the MHC class II family. In terms of processing, ubiquitinated in immature dendritic cells leading to down-regulation of MHC class II.

Its subcellular location is the membrane. This is H-2 class II histocompatibility antigen, A-Q beta chain (H2-Ab1) from Mus musculus (Mouse).